Reading from the N-terminus, the 122-residue chain is MTCAQWLWKKIIALYEQAAECDGEVVRPKEPNWTAWANEIRLMCVQDGRTHKQICEMYSRVSRDPFWCRNVLSPSKLREKWDELSLRLSPSVSTYTEKREDPYFKASYDNVDYSQIPAGFRG.

It belongs to the phage O protein family.

This is an uncharacterized protein from Escherichia coli O6:H1 (strain CFT073 / ATCC 700928 / UPEC).